The following is a 283-amino-acid chain: NAD kinase (283 aa).

Asp-68 (proton acceptor) is an active-site residue. Residues 68-69 (DG), Arg-73, 142-143 (ND), Arg-153, Arg-170, Asp-172, and 183-188 (TAYSLS) each bind NAD(+).

The protein belongs to the NAD kinase family. It depends on a divalent metal cation as a cofactor.

It localises to the cytoplasm. The enzyme catalyses NAD(+) + ATP = ADP + NADP(+) + H(+). In terms of biological role, involved in the regulation of the intracellular balance of NAD and NADP, and is a key enzyme in the biosynthesis of NADP. Catalyzes specifically the phosphorylation on 2'-hydroxyl of the adenosine moiety of NAD to yield NADP. The sequence is that of NAD kinase from Symbiobacterium thermophilum (strain DSM 24528 / JCM 14929 / IAM 14863 / T).